A 335-amino-acid polypeptide reads, in one-letter code: Glyceraldehyde-3-phosphate dehydrogenase (335 aa).

NAD(+)-binding positions include 12–13 (RI), Asp36, Arg80, and Ser122. D-glyceraldehyde 3-phosphate is bound by residues 152-154 (SCT), Thr183, Arg198, 211-212 (TG), and Arg234. Cys153 (nucleophile) is an active-site residue. Asn316 contributes to the NAD(+) binding site.

Belongs to the glyceraldehyde-3-phosphate dehydrogenase family. As to quaternary structure, homotetramer.

The protein localises to the cytoplasm. It catalyses the reaction D-glyceraldehyde 3-phosphate + phosphate + NAD(+) = (2R)-3-phospho-glyceroyl phosphate + NADH + H(+). It functions in the pathway carbohydrate degradation; glycolysis; pyruvate from D-glyceraldehyde 3-phosphate: step 1/5. Its function is as follows. Catalyzes the oxidative phosphorylation of glyceraldehyde 3-phosphate (G3P) to 1,3-bisphosphoglycerate (BPG) using the cofactor NAD. The first reaction step involves the formation of a hemiacetal intermediate between G3P and a cysteine residue, and this hemiacetal intermediate is then oxidized to a thioester, with concomitant reduction of NAD to NADH. The reduced NADH is then exchanged with the second NAD, and the thioester is attacked by a nucleophilic inorganic phosphate to produce BPG. The chain is Glyceraldehyde-3-phosphate dehydrogenase (gap) from Xanthobacter flavus.